A 224-amino-acid chain; its full sequence is Abasic site processing protein YoqW (224 aa).

Cys2 acts as the Nucleophile in catalysis. Cys2 bears the Thiazolidine linkage to a ring-opened DNA abasic site mark. The active site involves Glu106.

It belongs to the SOS response-associated peptidase family.

With respect to regulation, formation and reversal of DNA-protein cross-link depends on DNA context. Catalyzes formation of the thiazolidine linkage in presence of abasic sites in single-stranded DNA. Mediates the reversal of the thiazolidine cross-link in presence of double stranded DNA. Sensor of abasic sites in single-stranded DNA (ssDNA) required to preserve genome integrity by promoting error-free repair of abasic sites. Recognizes and binds abasic sites in ssDNA at replication forks and chemically modifies the lesion by forming a covalent cross-link with DNA: forms a stable thiazolidine linkage between a ring-opened abasic site and the alpha-amino and sulfhydryl substituents of its N-terminal catalytic cysteine residue. The DNA-protein cross-link is then reversed: able to catalyze the reversal of the thiazolidine cross-link and cycle between a cross-link and a non-cross-linked state depending on DNA context: mediates self-reversal of the thiazolidine cross-link in double stranded DNA. May act as a protease: mediates autocatalytic processing of its N-terminal methionine in order to expose the catalytic cysteine. The protein is Abasic site processing protein YoqW (yoqW) of Bacillus subtilis (strain 168).